The primary structure comprises 865 residues: Leucine--tRNA ligase (865 aa).

A 'HIGH' region motif is present at residues 44–54 (PYPSGRIHVGH). Residues 625-629 (KMSKS) carry the 'KMSKS' region motif. K628 lines the ATP pocket.

It belongs to the class-I aminoacyl-tRNA synthetase family.

Its subcellular location is the cytoplasm. It carries out the reaction tRNA(Leu) + L-leucine + ATP = L-leucyl-tRNA(Leu) + AMP + diphosphate. This Maricaulis maris (strain MCS10) (Caulobacter maris) protein is Leucine--tRNA ligase.